Here is a 509-residue protein sequence, read N- to C-terminus: MPGNREEFDIEKVLKSKKLEAIETSTEKKAPYTVFESTDKLLLIIVLSLVGFWSAISSPIYFPALPTLTKYFNTTPSVMNISVVAYLIFQGIAPTISSNLADTFGRRPVILGSIIVFCAVCIAISQTNVYWLLALLRCFQAAGIAPVFAISSGVAGDICTPANRGGMVGAVSGLQLAGNGIGGLVGAALISGFHTWRAIFIFLAIGGGVTFIFAFLVLAETSRRIVGNGSIRPKNVLNKAVLIYLPHFKNKITNDYSTLQPKGPFDILGPFKIFFQKEVFCTLLPSGMHFAAWTVSLTSLSTELESAKYNYSVMKVGLVYLPQGIACFIGSLIAGRCLNWYYRYRKNLYDKQMNDVPLNDRPPFNLVASRLTLTIVPLAMMVIGLSAFGWCLEYKKPIISIIISTILISFSASVMMSICTTMLVDLYPKQSGASASCVNLMRCWLAALFTGVLDKIISALGLGGTYTLLTGICLLTDLGLVYVLYTANQRFVNYVSPNQTAVNSDAEDY.

Topologically, residues 1 to 41 (MPGNREEFDIEKVLKSKKLEAIETSTEKKAPYTVFESTDKL) are cytoplasmic. A helical transmembrane segment spans residues 42–62 (LLIIVLSLVGFWSAISSPIYF). The Extracellular segment spans residues 63–75 (PALPTLTKYFNTT). The chain crosses the membrane as a helical span at residues 76 to 96 (PSVMNISVVAYLIFQGIAPTI). Topologically, residues 97-106 (SSNLADTFGR) are cytoplasmic. The chain crosses the membrane as a helical span at residues 107–129 (RPVILGSIIVFCAVCIAISQTNV). At 130–132 (YWL) the chain is on the extracellular side. A helical transmembrane segment spans residues 133 to 155 (LALLRCFQAAGIAPVFAISSGVA). The Cytoplasmic segment spans residues 156–169 (GDICTPANRGGMVG). Residues 170-190 (AVSGLQLAGNGIGGLVGAALI) traverse the membrane as a helical segment. The Extracellular portion of the chain corresponds to 191–197 (SGFHTWR). Residues 198–218 (AIFIFLAIGGGVTFIFAFLVL) form a helical membrane-spanning segment. Residues 219-278 (AETSRRIVGNGSIRPKNVLNKAVLIYLPHFKNKITNDYSTLQPKGPFDILGPFKIFFQKE) are Cytoplasmic-facing. Residues 279-299 (VFCTLLPSGMHFAAWTVSLTS) form a helical membrane-spanning segment. Residues 300-312 (LSTELESAKYNYS) lie on the Extracellular side of the membrane. A helical membrane pass occupies residues 313-333 (VMKVGLVYLPQGIACFIGSLI). The Cytoplasmic segment spans residues 334 to 370 (AGRCLNWYYRYRKNLYDKQMNDVPLNDRPPFNLVASR). A helical transmembrane segment spans residues 371–391 (LTLTIVPLAMMVIGLSAFGWC). Over 392 to 397 (LEYKKP) the chain is Extracellular. Residues 398–418 (IISIIISTILISFSASVMMSI) form a helical membrane-spanning segment. Topologically, residues 419–432 (CTTMLVDLYPKQSG) are cytoplasmic. A helical transmembrane segment spans residues 433–453 (ASASCVNLMRCWLAALFTGVL). Residues 454–455 (DK) lie on the Extracellular side of the membrane. Residues 456 to 476 (IISALGLGGTYTLLTGICLLT) form a helical membrane-spanning segment. At 477 to 509 (DLGLVYVLYTANQRFVNYVSPNQTAVNSDAEDY) the chain is on the cytoplasmic side.

This sequence belongs to the major facilitator superfamily. CAR1 family.

The protein resides in the cell membrane. In terms of biological role, MFS antiporter that does not display functional linkage as drug transporter and performs functions that significantly affect biofilm development and virulence. No substrate for transport has been identified yet, but plays an important role in the growth in the host. The protein is MFS antiporter QDR1 (QDR) of Candida albicans (strain SC5314 / ATCC MYA-2876) (Yeast).